The following is a 607-amino-acid chain: UvrABC system protein C (607 aa).

The GIY-YIG domain maps to 16 to 94; sequence GRPGVYRMFD…IKEWRPPYNI (79 aa). Residues 203–238 enclose the UVR domain; the sequence is NALTDELSGAMEQAASTLDFERAAELRDQISLLRRV.

This sequence belongs to the UvrC family. In terms of assembly, interacts with UvrB in an incision complex.

It is found in the cytoplasm. The UvrABC repair system catalyzes the recognition and processing of DNA lesions. UvrC both incises the 5' and 3' sides of the lesion. The N-terminal half is responsible for the 3' incision and the C-terminal half is responsible for the 5' incision. The polypeptide is UvrABC system protein C (Pseudomonas fluorescens (strain SBW25)).